The chain runs to 143 residues: uncharacterized protein (143 aa).

Residues 5 to 137 (DARLASDLSL…LRNAADLILE (133 aa)) form the HTH marR-type domain. Residues 51–74 (PGALAIRERVRPPSMTRVIASLAD) constitute a DNA-binding region (H-T-H motif).

In terms of assembly, homodimer.

This is an uncharacterized protein from Mycobacterium leprae (strain TN).